The primary structure comprises 505 residues: AMP phosphorylase (505 aa).

AMP is bound by residues G170, 196 to 201, and T205; that span reads SRAITS. The active-site Proton donor is D258. Positions 266 and 290 each coordinate AMP.

This sequence belongs to the thymidine/pyrimidine-nucleoside phosphorylase family. Type 2 subfamily.

It catalyses the reaction AMP + phosphate = alpha-D-ribose 1,5-bisphosphate + adenine. The enzyme catalyses CMP + phosphate = cytosine + alpha-D-ribose 1,5-bisphosphate. The catalysed reaction is UMP + phosphate = alpha-D-ribose 1,5-bisphosphate + uracil. In terms of biological role, catalyzes the conversion of AMP and phosphate to adenine and ribose 1,5-bisphosphate (R15P). Exhibits phosphorylase activity toward CMP and UMP in addition to AMP. Functions in an archaeal AMP degradation pathway, together with R15P isomerase and RubisCO. The sequence is that of AMP phosphorylase from Methanococcus maripaludis (strain C6 / ATCC BAA-1332).